Reading from the N-terminus, the 310-residue chain is Protoheme IX farnesyltransferase 2 (310 aa).

9 helical membrane passes run P25–G45, L49–I69, H98–T118, L121–M141, S145–C165, V176–F196, I222–T242, A245–Y265, and Q277–F297.

It belongs to the UbiA prenyltransferase family. Protoheme IX farnesyltransferase subfamily.

Its subcellular location is the cell inner membrane. It catalyses the reaction heme b + (2E,6E)-farnesyl diphosphate + H2O = Fe(II)-heme o + diphosphate. It participates in porphyrin-containing compound metabolism; heme O biosynthesis; heme O from protoheme: step 1/1. Its function is as follows. Converts heme B (protoheme IX) to heme O by substitution of the vinyl group on carbon 2 of heme B porphyrin ring with a hydroxyethyl farnesyl side group. The chain is Protoheme IX farnesyltransferase 2 from Shewanella sp. (strain MR-7).